A 268-amino-acid chain; its full sequence is Tryptophan synthase alpha chain (268 aa).

Active-site proton acceptor residues include Glu49 and Asp60.

This sequence belongs to the TrpA family. Tetramer of two alpha and two beta chains.

It catalyses the reaction (1S,2R)-1-C-(indol-3-yl)glycerol 3-phosphate + L-serine = D-glyceraldehyde 3-phosphate + L-tryptophan + H2O. Its pathway is amino-acid biosynthesis; L-tryptophan biosynthesis; L-tryptophan from chorismate: step 5/5. Functionally, the alpha subunit is responsible for the aldol cleavage of indoleglycerol phosphate to indole and glyceraldehyde 3-phosphate. In Edwardsiella ictaluri (strain 93-146), this protein is Tryptophan synthase alpha chain.